Reading from the N-terminus, the 470-residue chain is Argininosuccinate lyase (470 aa).

It belongs to the lyase 1 family. Argininosuccinate lyase subfamily.

It is found in the cytoplasm. It catalyses the reaction 2-(N(omega)-L-arginino)succinate = fumarate + L-arginine. The protein operates within amino-acid biosynthesis; L-arginine biosynthesis; L-arginine from L-ornithine and carbamoyl phosphate: step 3/3. The sequence is that of Argininosuccinate lyase from Prochlorococcus marinus (strain MIT 9303).